The chain runs to 113 residues: UPF0145 protein TK1926 (113 aa).

The protein belongs to the UPF0145 family.

The chain is UPF0145 protein TK1926 from Thermococcus kodakarensis (strain ATCC BAA-918 / JCM 12380 / KOD1) (Pyrococcus kodakaraensis (strain KOD1)).